Here is a 748-residue protein sequence, read N- to C-terminus: Formate acetyltransferase (748 aa).

The PFL domain occupies asparagine 5 to lysine 618. Catalysis depends on cysteine 412, which acts as the S-acetylcysteine intermediate. Cysteine 413 serves as the catalytic Cysteine radical intermediate. In terms of domain architecture, Glycine radical spans proline 625–methionine 748. Glycine radical is present on glycine 723.

Belongs to the glycyl radical enzyme (GRE) family. PFL subfamily. As to quaternary structure, homodimer.

The protein resides in the cytoplasm. The enzyme catalyses formate + acetyl-CoA = pyruvate + CoA. It functions in the pathway fermentation; pyruvate fermentation; formate from pyruvate: step 1/1. In terms of biological role, catalyzes the conversion of pyruvate to formate and acetyl-CoA. This chain is Formate acetyltransferase (pflB), found in Staphylococcus epidermidis (strain ATCC 35984 / DSM 28319 / BCRC 17069 / CCUG 31568 / BM 3577 / RP62A).